The following is a 387-amino-acid chain: Deoxyhypusine synthase (387 aa).

NAD(+)-binding positions include 108-112 (SNLIS), 134-136 (SAG), Glu-140, and Asp-257. Spermidine is bound at residue 139–140 (EE). Spermidine is bound at residue Asp-262. Gly-304 is a binding site for NAD(+). Position 309 (His-309) interacts with spermidine. 329–330 (TG) serves as a coordination point for NAD(+). Residues 335–337 (GSD) and 344–350 (EAVSWGK) each bind spermidine. Lys-350 serves as the catalytic Nucleophile. NAD(+) is bound at residue 363–364 (DV).

Belongs to the deoxyhypusine synthase family. As to quaternary structure, homotetramer. The cofactor is NAD(+).

It carries out the reaction [eIF5A protein]-L-lysine + spermidine = [eIF5A protein]-deoxyhypusine + propane-1,3-diamine. The protein operates within protein modification; eIF5A hypusination. In terms of biological role, catalyzes the NAD-dependent oxidative cleavage of spermidine and the subsequent transfer of the butylamine moiety of spermidine to the epsilon-amino group of a specific lysine residue of the eIF-5A precursor protein to form the intermediate deoxyhypusine residue. The polypeptide is Deoxyhypusine synthase (Saccharomyces cerevisiae (strain ATCC 204508 / S288c) (Baker's yeast)).